The primary structure comprises 242 residues: Carboxy-S-adenosyl-L-methionine synthase (242 aa).

Residues Tyr39, Gly64 to Ser66, Asp89 to Asn90, Asp117 to Ile118, Asn132, and Arg199 contribute to the S-adenosyl-L-methionine site.

Belongs to the class I-like SAM-binding methyltransferase superfamily. Cx-SAM synthase family. Homodimer.

It carries out the reaction prephenate + S-adenosyl-L-methionine = carboxy-S-adenosyl-L-methionine + 3-phenylpyruvate + H2O. Catalyzes the conversion of S-adenosyl-L-methionine (SAM) to carboxy-S-adenosyl-L-methionine (Cx-SAM). In Aliivibrio salmonicida (strain LFI1238) (Vibrio salmonicida (strain LFI1238)), this protein is Carboxy-S-adenosyl-L-methionine synthase.